Here is a 380-residue protein sequence, read N- to C-terminus: Cytochrome b (380 aa).

The next 4 membrane-spanning stretches (helical) occupy residues 33 to 53, 77 to 98, 113 to 133, and 178 to 198; these read FGSLLGLCLIIQILTGLFLAM, WLIRYMHANGASMFFICLFLHV, WNMGIVLLFAVMATAFMGYVL, and FFAFHFILPFIITALVLVHLL. Positions 83 and 97 each coordinate heme b. Residues His182 and His196 each coordinate heme b. His201 lines the a ubiquinone pocket. A run of 4 helical transmembrane segments spans residues 226–246, 288–308, 320–340, and 347–367; these read IKDFLGVLILLMAFMILTLFF, LGGVLALILSIVILAFMPLLH, ITQTMYWILVADLLVLTWIGG, and FIIIGQTASIAYFAIIVILMP.

Belongs to the cytochrome b family. The cytochrome bc1 complex contains 11 subunits: 3 respiratory subunits (MT-CYB, CYC1 and UQCRFS1), 2 core proteins (UQCRC1 and UQCRC2) and 6 low-molecular weight proteins (UQCRH/QCR6, UQCRB/QCR7, UQCRQ/QCR8, UQCR10/QCR9, UQCR11/QCR10 and a cleavage product of UQCRFS1). This cytochrome bc1 complex then forms a dimer. Heme b is required as a cofactor.

It is found in the mitochondrion inner membrane. Component of the ubiquinol-cytochrome c reductase complex (complex III or cytochrome b-c1 complex) that is part of the mitochondrial respiratory chain. The b-c1 complex mediates electron transfer from ubiquinol to cytochrome c. Contributes to the generation of a proton gradient across the mitochondrial membrane that is then used for ATP synthesis. In Microtus guentheri (Gunther's vole), this protein is Cytochrome b (MT-CYB).